The following is a 64-amino-acid chain: uncharacterized protein (64 aa).

The protein to P.abyssi PAB3148.

This is an uncharacterized protein from Archaeoglobus fulgidus (strain ATCC 49558 / DSM 4304 / JCM 9628 / NBRC 100126 / VC-16).